The chain runs to 243 residues: Pyridoxine 5'-phosphate synthase (243 aa).

Residue asparagine 9 participates in 3-amino-2-oxopropyl phosphate binding. 11–12 (DH) contacts 1-deoxy-D-xylulose 5-phosphate. A 3-amino-2-oxopropyl phosphate-binding site is contributed by arginine 20. Catalysis depends on histidine 45, which acts as the Proton acceptor. 1-deoxy-D-xylulose 5-phosphate-binding residues include arginine 47 and histidine 52. Glutamate 72 acts as the Proton acceptor in catalysis. Threonine 102 provides a ligand contact to 1-deoxy-D-xylulose 5-phosphate. Histidine 193 serves as the catalytic Proton donor. Residues glycine 194 and 215–216 (GH) each bind 3-amino-2-oxopropyl phosphate.

It belongs to the PNP synthase family. In terms of assembly, homooctamer; tetramer of dimers.

Its subcellular location is the cytoplasm. It catalyses the reaction 3-amino-2-oxopropyl phosphate + 1-deoxy-D-xylulose 5-phosphate = pyridoxine 5'-phosphate + phosphate + 2 H2O + H(+). It functions in the pathway cofactor biosynthesis; pyridoxine 5'-phosphate biosynthesis; pyridoxine 5'-phosphate from D-erythrose 4-phosphate: step 5/5. Catalyzes the complicated ring closure reaction between the two acyclic compounds 1-deoxy-D-xylulose-5-phosphate (DXP) and 3-amino-2-oxopropyl phosphate (1-amino-acetone-3-phosphate or AAP) to form pyridoxine 5'-phosphate (PNP) and inorganic phosphate. This Photobacterium profundum (strain SS9) protein is Pyridoxine 5'-phosphate synthase.